Here is a 205-residue protein sequence, read N- to C-terminus: Auxin-responsive protein IAA8 (205 aa).

Positions 1–48 (MECMASTEESLPASSSMDSCSGELPTTTTTAPAQSTASSGCRPPATAA) are disordered. Positions 7-19 (TEESLPASSSMDS) are enriched in polar residues. Over residues 25-39 (PTTTTTAPAQSTASS) the composition is skewed to low complexity. An EAR-like (transcriptional repression) motif is present at residues 58–62 (LRLGL). The segment at 71–98 (DGNNPSTPRSSLTTATVTADRGGGGGGH) is disordered. Residues 73 to 87 (NNPSTPRSSLTTATV) are compositionally biased toward polar residues. Positions 103–199 (SLFVKVYMEG…KRLRIARADD (97 aa)) constitute a PB1 domain.

This sequence belongs to the Aux/IAA family. As to quaternary structure, homodimers and heterodimers. As to expression, highly expressed in green shoots. Expressed in flowers.

Its subcellular location is the nucleus. Its function is as follows. Aux/IAA proteins are short-lived transcriptional factors that function as repressors of early auxin response genes at low auxin concentrations. In Oryza sativa subsp. japonica (Rice), this protein is Auxin-responsive protein IAA8 (IAA8).